A 341-amino-acid chain; its full sequence is Protein RecA, plasmid (341 aa).

80-87 (GAESSGKT) lines the ATP pocket.

It belongs to the RecA family.

The protein resides in the cytoplasm. Its function is as follows. Can catalyze the hydrolysis of ATP in the presence of single-stranded DNA, the ATP-dependent uptake of single-stranded DNA by duplex DNA, and the ATP-dependent hybridization of homologous single-stranded DNAs. It interacts with LexA causing its activation and leading to its autocatalytic cleavage. The sequence is that of Protein RecA, plasmid from Lactococcus lactis subsp. lactis (Streptococcus lactis).